Here is a 313-residue protein sequence, read N- to C-terminus: tRNA dimethylallyltransferase (313 aa).

10–17 (GPTASGKT) serves as a coordination point for ATP. Substrate is bound at residue 12 to 17 (TASGKT). Interaction with substrate tRNA stretches follow at residues 35 to 38 (DSAM), 159 to 163 (QRIQR), and 240 to 245 (RCVGYR).

This sequence belongs to the IPP transferase family. As to quaternary structure, monomer. Mg(2+) is required as a cofactor.

It catalyses the reaction adenosine(37) in tRNA + dimethylallyl diphosphate = N(6)-dimethylallyladenosine(37) in tRNA + diphosphate. Catalyzes the transfer of a dimethylallyl group onto the adenine at position 37 in tRNAs that read codons beginning with uridine, leading to the formation of N6-(dimethylallyl)adenosine (i(6)A). This is tRNA dimethylallyltransferase from Legionella pneumophila (strain Corby).